A 219-amino-acid polypeptide reads, in one-letter code: tRNA (guanine-N(7)-)-methyltransferase (219 aa).

4 residues coordinate S-adenosyl-L-methionine: E43, D68, E101, and N124. The substrate site is built by K128 and D160.

The protein belongs to the class I-like SAM-binding methyltransferase superfamily. TrmB family.

It catalyses the reaction guanosine(46) in tRNA + S-adenosyl-L-methionine = N(7)-methylguanosine(46) in tRNA + S-adenosyl-L-homocysteine. Its pathway is tRNA modification; N(7)-methylguanine-tRNA biosynthesis. Catalyzes the formation of N(7)-methylguanine at position 46 (m7G46) in tRNA. This Clostridium beijerinckii (strain ATCC 51743 / NCIMB 8052) (Clostridium acetobutylicum) protein is tRNA (guanine-N(7)-)-methyltransferase.